The sequence spans 144 residues: 3-dehydroquinate dehydratase (144 aa).

The active-site Proton acceptor is Y24. Positions 76, 82, and 89 each coordinate substrate. H102 (proton donor) is an active-site residue. Substrate contacts are provided by residues 103 to 104 (LS) and R113.

The protein belongs to the type-II 3-dehydroquinase family. Homododecamer.

The catalysed reaction is 3-dehydroquinate = 3-dehydroshikimate + H2O. Its pathway is metabolic intermediate biosynthesis; chorismate biosynthesis; chorismate from D-erythrose 4-phosphate and phosphoenolpyruvate: step 3/7. Functionally, catalyzes a trans-dehydration via an enolate intermediate. This chain is 3-dehydroquinate dehydratase, found in Bordetella avium (strain 197N).